Here is a 388-residue protein sequence, read N- to C-terminus: Nitric oxide reductase FlRd-NAD(+) reductase (388 aa).

The protein belongs to the FAD-dependent oxidoreductase family. Requires FAD as cofactor.

The protein localises to the cytoplasm. It catalyses the reaction 2 reduced [nitric oxide reductase rubredoxin domain] + NAD(+) + H(+) = 2 oxidized [nitric oxide reductase rubredoxin domain] + NADH. The protein operates within nitrogen metabolism; nitric oxide reduction. One of at least two accessory proteins for anaerobic nitric oxide (NO) reductase. Reduces the rubredoxin moiety of NO reductase. In Aeromonas hydrophila subsp. hydrophila (strain ATCC 7966 / DSM 30187 / BCRC 13018 / CCUG 14551 / JCM 1027 / KCTC 2358 / NCIMB 9240 / NCTC 8049), this protein is Nitric oxide reductase FlRd-NAD(+) reductase.